The following is a 1504-amino-acid chain: DNA polymerase zeta catalytic subunit (1504 aa).

Residues cysteine 1398, cysteine 1401, cysteine 1414, and cysteine 1417 each contribute to the Zn(2+) site. The CysA-type zinc-finger motif lies at 1398 to 1417; the sequence is CCNCGEELTKICSLQLCDDC. The [4Fe-4S] cluster site is built by cysteine 1446, cysteine 1449, cysteine 1468, and cysteine 1473. The CysB motif signature appears at 1446–1473; sequence CRTCSYRYTSDAGIENDHIASKCNSYDC.

The protein belongs to the DNA polymerase type-B family. In terms of assembly, forms DNA polymerase zeta with REV7. Requires [4Fe-4S] cluster as cofactor.

Its subcellular location is the mitochondrion. The protein localises to the nucleus. It catalyses the reaction DNA(n) + a 2'-deoxyribonucleoside 5'-triphosphate = DNA(n+1) + diphosphate. Nonessential DNA polymerase. Required for DNA damage induced mutagenesis. Involved in DNA repair, mitochondrial DNA repair and translesion synthesis. Translesion synthesis in S.cerevisiae may use a specialized DNA polymerase that is not required for other DNA replicative processes. Has a role in the bypass of abasic (AP) sites. Highly inefficient in incorporating nucleotides opposite the AP site, but efficiently extends from nucleotides, particularly an A, inserted opposite the lesion. The protein is DNA polymerase zeta catalytic subunit (REV3) of Saccharomyces cerevisiae (strain ATCC 204508 / S288c) (Baker's yeast).